A 491-amino-acid polypeptide reads, in one-letter code: Probable cytosol aminopeptidase (491 aa).

Residues lysine 261 and aspartate 266 each coordinate Mn(2+). Lysine 273 is an active-site residue. Aspartate 284, aspartate 343, and glutamate 345 together coordinate Mn(2+). The active site involves arginine 347.

Belongs to the peptidase M17 family. The cofactor is Mn(2+).

The protein resides in the cytoplasm. It catalyses the reaction Release of an N-terminal amino acid, Xaa-|-Yaa-, in which Xaa is preferably Leu, but may be other amino acids including Pro although not Arg or Lys, and Yaa may be Pro. Amino acid amides and methyl esters are also readily hydrolyzed, but rates on arylamides are exceedingly low.. It carries out the reaction Release of an N-terminal amino acid, preferentially leucine, but not glutamic or aspartic acids.. Presumably involved in the processing and regular turnover of intracellular proteins. Catalyzes the removal of unsubstituted N-terminal amino acids from various peptides. In Geobacter sp. (strain M21), this protein is Probable cytosol aminopeptidase.